The following is a 370-amino-acid chain: MKPTRVPNNPCFSSGPCAKHPGYSIEELKDTPFGRSHRSNLGKEKLAEAIKKTRDMLGLPDDYLVGIVPASDTGAFEMCLWSMLGCRGVDVLVWESFSKGWATDITKQLKLKDVRVFEAEYGKLPDLKKVDFKNDVVFVWNGTTSGVKVPNGDWIPENREGLTLCDATSAIFAMDIPYHKLDVITFSWQKVLGGEGAHGMLILSPRAVQRLESYTPAWPLPKIFRLTKGGKLNKKIFEGSTINTPSMLANEDWLATLKWAESVGGLKPLIQRTNDNLAVFEAFVAKNNWIHFLAETKEIRSSTSVCFKVDLSDEKLKELIKTLEKEKVAYDIGSYRDAPSGLRIWCGATVEKEDLQCLCEWIEWAYNLVK.

Residue Arg-38 coordinates L-glutamate. Pyridoxal 5'-phosphate is bound by residues Trp-101, Thr-143, Asp-166, and Gln-189. Lys-190 carries the post-translational modification N6-(pyridoxal phosphate)lysine. 243–244 (NT) is a binding site for pyridoxal 5'-phosphate.

Belongs to the class-V pyridoxal-phosphate-dependent aminotransferase family. SerC subfamily. Homodimer. Pyridoxal 5'-phosphate is required as a cofactor.

It localises to the cytoplasm. The catalysed reaction is O-phospho-L-serine + 2-oxoglutarate = 3-phosphooxypyruvate + L-glutamate. It catalyses the reaction 4-(phosphooxy)-L-threonine + 2-oxoglutarate = (R)-3-hydroxy-2-oxo-4-phosphooxybutanoate + L-glutamate. It participates in amino-acid biosynthesis; L-serine biosynthesis; L-serine from 3-phospho-D-glycerate: step 2/3. It functions in the pathway cofactor biosynthesis; pyridoxine 5'-phosphate biosynthesis; pyridoxine 5'-phosphate from D-erythrose 4-phosphate: step 3/5. Its function is as follows. Catalyzes the reversible conversion of 3-phosphohydroxypyruvate to phosphoserine and of 3-hydroxy-2-oxo-4-phosphonooxybutanoate to phosphohydroxythreonine. This is Phosphoserine aminotransferase (serC) from Methanosarcina barkeri (strain Fusaro / DSM 804).